We begin with the raw amino-acid sequence, 368 residues long: Leu/Ile/Val-binding protein homolog 3 (368 aa).

The N-terminal stretch at 1-23 (MNLKLLSSVAFAATIGFASAAYA) is a signal peptide.

It belongs to the leucine-binding protein family.

Component of an amino-acid transport system. The polypeptide is Leu/Ile/Val-binding protein homolog 3 (Brucella melitensis biotype 1 (strain ATCC 23456 / CCUG 17765 / NCTC 10094 / 16M)).